The chain runs to 178 residues: Bifunctional protein PyrR (178 aa).

Positions 97 to 109 (VVLVDDVLYTGRT) match the PRPP-binding motif.

It belongs to the purine/pyrimidine phosphoribosyltransferase family. PyrR subfamily.

It carries out the reaction UMP + diphosphate = 5-phospho-alpha-D-ribose 1-diphosphate + uracil. Regulates the transcription of the pyrimidine nucleotide (pyr) operon in response to exogenous pyrimidines. Its function is as follows. Also displays a weak uracil phosphoribosyltransferase activity which is not physiologically significant. The chain is Bifunctional protein PyrR from Herpetosiphon aurantiacus (strain ATCC 23779 / DSM 785 / 114-95).